A 226-amino-acid polypeptide reads, in one-letter code: uncharacterized protein (226 aa).

Disordered stretches follow at residues 1-20 (MGAE…AVQT) and 205-226 (LDRK…QRDA).

This is an uncharacterized protein from Treponema pallidum (strain Nichols).